The primary structure comprises 551 residues: Urocanate hydratase (551 aa).

NAD(+) is bound by residues 48–49 (GG), glutamine 126, 172–174 (GMG), glutamate 192, arginine 197, 238–239 (NA), 259–263 (QTSAH), 269–270 (YI), and tyrosine 318. Cysteine 406 is a catalytic residue. Glycine 488 lines the NAD(+) pocket.

It belongs to the urocanase family. It depends on NAD(+) as a cofactor.

It is found in the cytoplasm. It catalyses the reaction 4-imidazolone-5-propanoate = trans-urocanate + H2O. The protein operates within amino-acid degradation; L-histidine degradation into L-glutamate; N-formimidoyl-L-glutamate from L-histidine: step 2/3. In terms of biological role, catalyzes the conversion of urocanate to 4-imidazolone-5-propionate. In Geobacillus kaustophilus (strain HTA426), this protein is Urocanate hydratase.